The primary structure comprises 192 residues: Small ribosomal subunit protein bS16 (192 aa).

Over residues 149-161 the composition is skewed to basic and acidic residues; that stretch reads EKKAAEAKAKAEA. Positions 149-192 are disordered; it reads EKKAAEAKAKAEAEAAAAAEEATETEETPMEAAAEEAPAAESAE. Residues 178-192 are compositionally biased toward low complexity; sequence MEAAAEEAPAAESAE.

It belongs to the bacterial ribosomal protein bS16 family.

This is Small ribosomal subunit protein bS16 from Porphyromonas gingivalis (strain ATCC 33277 / DSM 20709 / CIP 103683 / JCM 12257 / NCTC 11834 / 2561).